The chain runs to 318 residues: MSVVVYAPASIGNVSVGFDVLGAAVSPIDGTLLGDRVLVELGSEAFTLATAGSFVDKLPENPKDNIVYDCWCVFSRELNKKNVALKNVHMILEKNMPIGSGLGSSACSIVAALDALNQFHDNPLNDVELLALMGEMEGQISGGIHYDNVAPCYLGGLQLMVEELGIISQEVPCFDEWYWVMAYPGIKVSTAEAREILPSQYRRQDVIAHGRNLAGFIHACYSKQPELAAKMIKDVVAEPYRERLLPNFAKAREYAASAGALTTGISGSGPTLFSICTDKDVADRVSRWLQENYVQNNEGFVHVCRLDKQGSQVTGSKL.

An ATP-binding site is contributed by 97 to 107 (PIGSGLGSSAC).

The protein belongs to the GHMP kinase family. Homoserine kinase subfamily.

The protein resides in the cytoplasm. The enzyme catalyses L-homoserine + ATP = O-phospho-L-homoserine + ADP + H(+). The protein operates within amino-acid biosynthesis; L-threonine biosynthesis; L-threonine from L-aspartate: step 4/5. Functionally, catalyzes the ATP-dependent phosphorylation of L-homoserine to L-homoserine phosphate. The chain is Homoserine kinase from Aliivibrio fischeri (strain MJ11) (Vibrio fischeri).